The following is a 174-amino-acid chain: dCTP deaminase, dUMP-forming (174 aa).

Residues 93–98 (RSSIGR), D111, 119–121 (TLE), Q138, and Y151 contribute to the dCTP site. E121 acts as the Proton donor/acceptor in catalysis.

The protein belongs to the dCTP deaminase family. In terms of assembly, homotrimer.

The enzyme catalyses dCTP + 2 H2O = dUMP + NH4(+) + diphosphate. It functions in the pathway pyrimidine metabolism; dUMP biosynthesis; dUMP from dCTP: step 1/1. Bifunctional enzyme that catalyzes both the deamination of dCTP to dUTP and the hydrolysis of dUTP to dUMP without releasing the toxic dUTP intermediate. The sequence is that of dCTP deaminase, dUMP-forming from Leptospira biflexa serovar Patoc (strain Patoc 1 / Ames).